The chain runs to 860 residues: Leucine--tRNA ligase (860 aa).

A 'HIGH' region motif is present at residues 42–52 (PYPSGRLHMGH). Residues 619 to 623 (KMSKS) carry the 'KMSKS' region motif. Position 622 (Lys-622) interacts with ATP.

This sequence belongs to the class-I aminoacyl-tRNA synthetase family.

The protein localises to the cytoplasm. The catalysed reaction is tRNA(Leu) + L-leucine + ATP = L-leucyl-tRNA(Leu) + AMP + diphosphate. The sequence is that of Leucine--tRNA ligase from Serratia proteamaculans (strain 568).